We begin with the raw amino-acid sequence, 368 residues long: Peptide chain release factor 2 (368 aa).

Glutamine 250 carries the post-translational modification N5-methylglutamine.

The protein belongs to the prokaryotic/mitochondrial release factor family. Methylated by PrmC. Methylation increases the termination efficiency of RF2.

The protein resides in the cytoplasm. Functionally, peptide chain release factor 2 directs the termination of translation in response to the peptide chain termination codons UGA and UAA. This chain is Peptide chain release factor 2, found in Chlamydia trachomatis serovar L2 (strain ATCC VR-902B / DSM 19102 / 434/Bu).